A 424-amino-acid chain; its full sequence is Riboflavin biosynthesis protein RibBA (424 aa).

The tract at residues 1 to 206 (MVTCEAGIAS…VDDLITYRWT (206 aa)) is DHBP synthase. D-ribulose 5-phosphate is bound by residues 32–33 (RE), aspartate 37, 145–149 (RPGHT), and glutamate 169. Glutamate 33 provides a ligand contact to Mg(2+). Histidine 148 serves as a coordination point for Mg(2+). The GTP cyclohydrolase II stretch occupies residues 207-424 (FDSLVEHVSS…YETVERTSCC (218 aa)). 257–261 (RVHSE) lines the GTP pocket. 3 residues coordinate Zn(2+): cysteine 262, cysteine 273, and cysteine 275. Residues glutamine 278, 301–303 (EGR), and threonine 323 contribute to the GTP site. Aspartate 335 serves as the catalytic Proton acceptor; for GTP cyclohydrolase activity. Arginine 337 acts as the Nucleophile; for GTP cyclohydrolase activity in catalysis. GTP contacts are provided by threonine 358 and lysine 363.

The protein in the N-terminal section; belongs to the DHBP synthase family. This sequence in the C-terminal section; belongs to the GTP cyclohydrolase II family. The cofactor is Mg(2+). Requires Mn(2+) as cofactor. It depends on Zn(2+) as a cofactor.

It catalyses the reaction D-ribulose 5-phosphate = (2S)-2-hydroxy-3-oxobutyl phosphate + formate + H(+). It carries out the reaction GTP + 4 H2O = 2,5-diamino-6-hydroxy-4-(5-phosphoribosylamino)-pyrimidine + formate + 2 phosphate + 3 H(+). It functions in the pathway cofactor biosynthesis; riboflavin biosynthesis; 2-hydroxy-3-oxobutyl phosphate from D-ribulose 5-phosphate: step 1/1. Its pathway is cofactor biosynthesis; riboflavin biosynthesis; 5-amino-6-(D-ribitylamino)uracil from GTP: step 1/4. Functionally, catalyzes the conversion of D-ribulose 5-phosphate to formate and 3,4-dihydroxy-2-butanone 4-phosphate. Catalyzes the conversion of GTP to 2,5-diamino-6-ribosylamino-4(3H)-pyrimidinone 5'-phosphate (DARP), formate and pyrophosphate. This is Riboflavin biosynthesis protein RibBA from Chlamydia muridarum (strain MoPn / Nigg).